Here is a 133-residue protein sequence, read N- to C-terminus: Small ribosomal subunit protein uS8 (133 aa).

Belongs to the universal ribosomal protein uS8 family. As to quaternary structure, part of the 30S ribosomal subunit. Contacts proteins S5 and S12.

One of the primary rRNA binding proteins, it binds directly to 16S rRNA central domain where it helps coordinate assembly of the platform of the 30S subunit. This is Small ribosomal subunit protein uS8 from Trichodesmium erythraeum (strain IMS101).